Consider the following 562-residue polypeptide: Protein FAM222B (562 aa).

Composition is skewed to low complexity over residues 155–167 and 183–201; these read QQALQHAQTLAHA and ALSHPQSLQQPQGLGHPQP. Disordered regions lie at residues 155-203, 219-245, and 537-562; these read QQAL…QPMA, LQHPHNPLLHGGRKMPDSDAPPNVTVS, and AHRAPGNRAPDPTESRSLHIQHPGYR.

Belongs to the FAM222 family.

This Homo sapiens (Human) protein is Protein FAM222B (FAM222B).